Reading from the N-terminus, the 190-residue chain is uncharacterized protein (190 aa).

A helical transmembrane segment spans residues 1 to 21 (MLVMSITFSFVAVALLVYFYV). The span at 103–114 (REEVCARPEHRS) shows a compositional bias: basic and acidic residues. The tract at residues 103–130 (REEVCARPEHRSAPSRAGSSAAKPTPTK) is disordered.

The protein to B.burgdorferi BB0265.

The protein localises to the membrane. This is an uncharacterized protein from Treponema pallidum (strain Nichols).